The following is a 256-amino-acid chain: EF-hand calcium-binding domain-containing protein 4A (256 aa).

Positions 1–10 (MAHLGSRRRM) are enriched in basic residues. The interval 1 to 32 (MAHLGSRRRMSPGLRTRIAHRKAHRTPPSPLI) is disordered. EF-hand domains lie at 41 to 69 (KAHE…QNEL) and 71 to 106 (LTPE…LLGV). Ca(2+) is bound by residues D84, S86, N88, Y90, and E95. Residues 190–235 (IRDVHHEKDTLEQALKRKETDHGREVRCLYEEMEQQIKIERERLLK) are a coiled coil.

This sequence belongs to the EFCAB4 family.

This Xenopus tropicalis (Western clawed frog) protein is EF-hand calcium-binding domain-containing protein 4A (cracr2b).